The primary structure comprises 316 residues: Delta(1)-pyrroline-2-carboxylate reductase (316 aa).

This sequence belongs to the ornithine cyclodeaminase/mu-crystallin family.

It catalyses the reaction L-proline + NAD(+) = 1-pyrroline-2-carboxylate + NADH + H(+). The enzyme catalyses L-proline + NADP(+) = 1-pyrroline-2-carboxylate + NADPH + H(+). Catalyzes the reduction of Delta(1)-pyrroline-2-carboxylate (Pyr2C) to L-proline, using preferentially NADPH over NADH as the electron donor. Is likely involved in a degradation pathway that converts trans-3-hydroxy-L-proline (t3LHyp) to L-proline, which would allow P.denitrificans to grow on t3LHyp as a sole carbon source. This is Delta(1)-pyrroline-2-carboxylate reductase from Paracoccus denitrificans (strain Pd 1222).